The following is a 549-amino-acid chain: Longitudinals lacking protein, isoforms H/M/V (549 aa).

Residues 32-97 (VDCTLAAEGK…MYRGEVNISQ (66 aa)) form the BTB domain. Disordered stretches follow at residues 115-200 (LSDN…SSVL) and 228-340 (SSGP…ASAS). Composition is skewed to low complexity over residues 162-175 (SGDV…SSSP), 228-251 (SSGP…LTST), 263-293 (TSST…QTTS), and 329-340 (NSATGPNPASAS).

Mostly neuronal.

The protein localises to the nucleus. Putative transcription factor required for axon growth and guidance in the central and peripheral nervous systems. Repels CNS axons away from the midline by promoting the expression of the midline repellent sli and its receptor robo. In Drosophila melanogaster (Fruit fly), this protein is Longitudinals lacking protein, isoforms H/M/V.